We begin with the raw amino-acid sequence, 222 residues long: Ras-related protein Rab11D (222 aa).

22 to 29 (GDSAVGKS) serves as a coordination point for GTP. Positions 44–52 (SKATIGVEF) match the Effector region motif. GTP-binding positions include 70 to 74 (DTAGQ) and 128 to 131 (NKTD). 2 S-geranylgeranyl cysteine lipidation sites follow: Cys219 and Cys220.

It belongs to the small GTPase superfamily. Rab family.

The protein resides in the cell membrane. This is Ras-related protein Rab11D (RAB11D) from Nicotiana tabacum (Common tobacco).